The primary structure comprises 362 residues: Atypical chemokine receptor 3 (362 aa).

The Extracellular portion of the chain corresponds to 1–40 (MDLHLFDYSEPGNFSDISWPCNSSDCIVVDTVMCPNMPNK). N-linked (GlcNAc...) asparagine glycans are attached at residues asparagine 13, asparagine 22, and asparagine 39. Residues 41 to 61 (SVLLYTLSFIYIFIFVIGMIA) traverse the membrane as a helical segment. Topologically, residues 62–81 (NSVVVWVNIQAKTTGYDTHC) are cytoplasmic. The chain crosses the membrane as a helical span at residues 82-102 (YILNLAIADLWVVLTIPVWVV). The Extracellular segment spans residues 103 to 118 (SLVQHNQWPMGELTCK). A disulfide bridge links cysteine 117 with cysteine 196. A helical transmembrane segment spans residues 119-139 (VTHLIFSINLFGSIFFLTCMS). Topologically, residues 140-162 (VDRYLSITYFTNTPSSRKKMVRR) are cytoplasmic. Residues 163–183 (VVCILVWLLAFCVSLPDTYYL) traverse the membrane as a helical segment. Topologically, residues 184–213 (KTVTSASNNETYCRSFYPEHSIKEWLIGME) are extracellular. The helical transmembrane segment at 214–234 (LVSVVLGFAVPFSIIAVFYFL) threads the bilayer. At 235–252 (LARAISASSDQEKHSSRK) the chain is on the cytoplasmic side. Residues 253 to 273 (IIFSYVVVFLVCWLPYHVAVL) form a helical membrane-spanning segment. The Extracellular portion of the chain corresponds to 274–296 (LDIFSILHYIPFTCRLEHALFTA). Residues 297–319 (LHVTQCLSLVHCCVNPVLYSFIN) traverse the membrane as a helical segment. Residues 320–362 (RNYRYELMKAFIFKYSAKTGLTKLIDASRVSETEYSALEQSTK) lie on the Cytoplasmic side of the membrane. Residues 324–362 (YELMKAFIFKYSAKTGLTKLIDASRVSETEYSALEQSTK) are C-terminal cytoplasmic tail. Residues serine 347, serine 350, and serine 355 each carry the phosphoserine modification.

The protein belongs to the G-protein coupled receptor 1 family. Atypical chemokine receptor subfamily. In terms of assembly, homodimer. Can form heterodimers with CXCR4; heterodimerization may regulate CXCR4 signaling activity. Interacts with ARRB1 and ARRB2. The Ser/Thr residues in the C-terminal cytoplasmic tail may be phosphorylated. In terms of processing, ubiquitinated at the Lys residues in its C-terminal cytoplasmic tail and is essential for correct trafficking from and to the cell membrane. Deubiquitinated by CXCL12-stimulation in a reversible manner. As to expression, expressed in monocytes, basophils, B-cells, umbilical vein endothelial cells (HUVEC) and B-lymphoblastoid cells. Lower expression detected in CD4+ T-lymphocytes and natural killer cells. In the brain, detected in endothelial cells and capillaries, and in mature neurons of the frontal cortex and hippocampus. Expressed in tubular formation in the kidney. Highly expressed in astroglial tumor endothelial, microglial and glioma cells. Expressed at low levels in normal CD34+ progenitor cells, but at very high levels in several myeloid malignant cell lines. Expressed in breast carcinomas but not in normal breast tissue (at protein level).

The protein localises to the cell membrane. It localises to the early endosome. Its subcellular location is the recycling endosome. Functionally, atypical chemokine receptor that controls chemokine levels and localization via high-affinity chemokine binding that is uncoupled from classic ligand-driven signal transduction cascades, resulting instead in chemokine sequestration, degradation, or transcytosis. Also known as interceptor (internalizing receptor) or chemokine-scavenging receptor or chemokine decoy receptor. Acts as a receptor for chemokines CXCL11 and CXCL12/SDF1. Chemokine binding does not activate G-protein-mediated signal transduction but instead induces beta-arrestin recruitment, leading to ligand internalization and activation of MAPK signaling pathway. Required for regulation of CXCR4 protein levels in migrating interneurons, thereby adapting their chemokine responsiveness. In glioma cells, transduces signals via MEK/ERK pathway, mediating resistance to apoptosis. Promotes cell growth and survival. Not involved in cell migration, adhesion or proliferation of normal hematopoietic progenitors but activated by CXCL11 in malignant hemapoietic cells, leading to phosphorylation of ERK1/2 (MAPK3/MAPK1) and enhanced cell adhesion and migration. Plays a regulatory role in CXCR4-mediated activation of cell surface integrins by CXCL12. Required for heart valve development. Regulates axon guidance in the oculomotor system through the regulation of CXCL12 levels. In terms of biological role, (Microbial infection) Acts as a coreceptor with CXCR4 for a restricted number of HIV isolates. The sequence is that of Atypical chemokine receptor 3 from Homo sapiens (Human).